A 297-amino-acid chain; its full sequence is Acetyl-coenzyme A carboxylase carboxyl transferase subunit beta (297 aa).

The CoA carboxyltransferase N-terminal domain occupies 27–296; the sequence is LWHKCPSCEA…PVETSQVTAK (270 aa). Residues Cys31, Cys34, Cys50, and Cys53 each contribute to the Zn(2+) site. The segment at 31–53 adopts a C4-type zinc-finger fold; sequence CPSCEAVLYRPELEKTLDVCPKC.

The protein belongs to the AccD/PCCB family. Acetyl-CoA carboxylase is a heterohexamer composed of biotin carboxyl carrier protein (AccB), biotin carboxylase (AccC) and two subunits each of ACCase subunit alpha (AccA) and ACCase subunit beta (AccD). Zn(2+) is required as a cofactor.

It is found in the cytoplasm. It carries out the reaction N(6)-carboxybiotinyl-L-lysyl-[protein] + acetyl-CoA = N(6)-biotinyl-L-lysyl-[protein] + malonyl-CoA. Its pathway is lipid metabolism; malonyl-CoA biosynthesis; malonyl-CoA from acetyl-CoA: step 1/1. Its function is as follows. Component of the acetyl coenzyme A carboxylase (ACC) complex. Biotin carboxylase (BC) catalyzes the carboxylation of biotin on its carrier protein (BCCP) and then the CO(2) group is transferred by the transcarboxylase to acetyl-CoA to form malonyl-CoA. The sequence is that of Acetyl-coenzyme A carboxylase carboxyl transferase subunit beta from Stutzerimonas stutzeri (strain A1501) (Pseudomonas stutzeri).